Here is a 120-residue protein sequence, read N- to C-terminus: Small ribosomal subunit protein uS13 (120 aa).

The disordered stretch occupies residues 93–120; that stretch reads RRGLPCRGQKTKTNARTRKGKRKTVGAA.

It belongs to the universal ribosomal protein uS13 family. In terms of assembly, part of the 30S ribosomal subunit. Forms a loose heterodimer with protein S19. Forms two bridges to the 50S subunit in the 70S ribosome.

In terms of biological role, located at the top of the head of the 30S subunit, it contacts several helices of the 16S rRNA. In the 70S ribosome it contacts the 23S rRNA (bridge B1a) and protein L5 of the 50S subunit (bridge B1b), connecting the 2 subunits; these bridges are implicated in subunit movement. Contacts the tRNAs in the A and P-sites. This Sulfurimonas denitrificans (strain ATCC 33889 / DSM 1251) (Thiomicrospira denitrificans (strain ATCC 33889 / DSM 1251)) protein is Small ribosomal subunit protein uS13.